The following is a 317-amino-acid chain: MPLQGPQRRLLGSLNSTLPATPYLGLTTNQTEPPCLEVSIPDGLFLSLGLVSLVENVLVVTAIAKNRNLHSPMYYFICCLAVSDLLVSMSNVLEMAILLLLEAGVLATQASVLQQLDNIIDVLICGSMVSSLCFLGSIAVDRYISIFYALRYHSIMMLPRVWRAIVAIWVVSVLSSTLFIAYYNHTAVLLCLVTFFVAMLVLMAVLYVHMLARACQHARGIARLHKRQHPIHQGFGLKGAATLTILLGVFFLCWGPFFLHLSLLILCPQHPTCGCVFKNFKLFLTLILCSAIVDPLIYAFRSQELRKTLQEVLLCSW.

Residues 1 to 37 lie on the Extracellular side of the membrane; the sequence is MPLQGPQRRLLGSLNSTLPATPYLGLTTNQTEPPCLE. N29 is a glycosylation site (N-linked (GlcNAc...) asparagine). A helical transmembrane segment spans residues 38 to 63; the sequence is VSIPDGLFLSLGLVSLVENVLVVTAI. At 64–72 the chain is on the cytoplasmic side; the sequence is AKNRNLHSP. A helical transmembrane segment spans residues 73 to 93; that stretch reads MYYFICCLAVSDLLVSMSNVL. At 94–118 the chain is on the extracellular side; that stretch reads EMAILLLLEAGVLATQASVLQQLDN. The chain crosses the membrane as a helical span at residues 119–140; sequence IIDVLICGSMVSSLCFLGSIAV. The Cytoplasmic portion of the chain corresponds to 141–163; the sequence is DRYISIFYALRYHSIMMLPRVWR. Residues 164 to 183 traverse the membrane as a helical segment; sequence AIVAIWVVSVLSSTLFIAYY. At 184–191 the chain is on the extracellular side; that stretch reads NHTAVLLC. The helical transmembrane segment at 192 to 211 threads the bilayer; sequence LVTFFVAMLVLMAVLYVHML. Topologically, residues 212–240 are cytoplasmic; the sequence is ARACQHARGIARLHKRQHPIHQGFGLKGA. Residues 241–266 traverse the membrane as a helical segment; the sequence is ATLTILLGVFFLCWGPFFLHLSLLIL. Residues 267-279 are Extracellular-facing; sequence CPQHPTCGCVFKN. A helical membrane pass occupies residues 280–300; it reads FKLFLTLILCSAIVDPLIYAF. Residues 301–317 lie on the Cytoplasmic side of the membrane; that stretch reads RSQELRKTLQEVLLCSW. The S-palmitoyl cysteine moiety is linked to residue C315.

This sequence belongs to the G-protein coupled receptor 1 family. As to quaternary structure, interacts with MGRN1, but does not undergo MGRN1-mediated ubiquitination; this interaction competes with GNAS-binding and thus inhibits agonist-induced cAMP production. Interacts with OPN3; the interaction results in a decrease in MC1R-mediated cAMP signaling and ultimately a decrease in melanin production in melanocytes.

It localises to the cell membrane. Its function is as follows. Receptor for MSH (alpha, beta and gamma) and ACTH. The activity of this receptor is mediated by G proteins which activate adenylate cyclase. Mediates melanogenesis, the production of eumelanin (black/brown) and phaeomelanin (red/yellow), via regulation of cAMP signaling in melanocytes. This Equus caballus (Horse) protein is Melanocyte-stimulating hormone receptor (MC1R).